A 218-amino-acid chain; its full sequence is NADH dehydrogenase [ubiquinone] iron-sulfur protein 7, mitochondrial (218 aa).

Positions 34-48 are enriched in low complexity; sequence LPALSPSTSPTSYTR. The interval 34–61 is disordered; that stretch reads LPALSPSTSPTSYTRPGPPSTSPPPPGL. Over residues 49–60 the composition is skewed to pro residues; that stretch reads PGPPSTSPPPPG. The [4Fe-4S] cluster site is built by Cys93, Cys94, Cys158, and Cys188.

It belongs to the complex I 20 kDa subunit family. As to quaternary structure, complex I is composed of at least 49 different subunits. This is a component of the iron-sulfur (IP) fragment of the enzyme. The cofactor is [4Fe-4S] cluster.

The protein localises to the mitochondrion. The catalysed reaction is a ubiquinone + NADH + 5 H(+)(in) = a ubiquinol + NAD(+) + 4 H(+)(out). Functionally, core subunit of the mitochondrial membrane respiratory chain NADH dehydrogenase (Complex I) that is believed to belong to the minimal assembly required for catalysis. Complex I functions in the transfer of electrons from NADH to the respiratory chain. The immediate electron acceptor for the enzyme is believed to be ubiquinone. The chain is NADH dehydrogenase [ubiquinone] iron-sulfur protein 7, mitochondrial from Arabidopsis thaliana (Mouse-ear cress).